A 341-amino-acid chain; its full sequence is Adenylosuccinate synthetase (341 aa).

GTP-binding positions include Gly-12–Lys-18 and Gly-42–Ser-44. The Proton acceptor role is filled by Asp-13. Residues Asp-13 and Gly-42 each contribute to the Mg(2+) site. IMP contacts are provided by residues Asp-13–Lys-16, Asn-40–His-43, Thr-127, Arg-141, Gln-179, Thr-194, and Arg-256. The Proton donor role is filled by His-43. Substrate is bound at residue Val-252–Arg-258. GTP is bound by residues Arg-258, Cys-284–Asp-286, and Ser-324–Gly-326.

This sequence belongs to the adenylosuccinate synthetase family. As to quaternary structure, homodimer. Mg(2+) is required as a cofactor.

It is found in the cytoplasm. The catalysed reaction is IMP + L-aspartate + GTP = N(6)-(1,2-dicarboxyethyl)-AMP + GDP + phosphate + 2 H(+). It functions in the pathway purine metabolism; AMP biosynthesis via de novo pathway; AMP from IMP: step 1/2. Plays an important role in the de novo pathway of purine nucleotide biosynthesis. Catalyzes the first committed step in the biosynthesis of AMP from IMP. In Methanosphaera stadtmanae (strain ATCC 43021 / DSM 3091 / JCM 11832 / MCB-3), this protein is Adenylosuccinate synthetase.